Reading from the N-terminus, the 283-residue chain is uncharacterized protein (283 aa).

The segment at 1–21 (MSAYTHPMERELSGLSSRGNS) is disordered. The chain crosses the membrane as a helical span at residues 41–61 (SIFIASLVTFGVLMITLLIAL).

This sequence belongs to the APS1/VSP family.

The protein resides in the membrane. This is an uncharacterized protein from Arabidopsis thaliana (Mouse-ear cress).